We begin with the raw amino-acid sequence, 570 residues long: Formate--tetrahydrofolate ligase (570 aa).

65–72 serves as a coordination point for ATP; the sequence is TPYGEGKT.

This sequence belongs to the formate--tetrahydrofolate ligase family.

The catalysed reaction is (6S)-5,6,7,8-tetrahydrofolate + formate + ATP = (6R)-10-formyltetrahydrofolate + ADP + phosphate. It participates in one-carbon metabolism; tetrahydrofolate interconversion. The sequence is that of Formate--tetrahydrofolate ligase from Shewanella piezotolerans (strain WP3 / JCM 13877).